We begin with the raw amino-acid sequence, 315 residues long: Cobalamin biosynthesis protein CobD (315 aa).

Transmembrane regions (helical) follow at residues 48-68, 77-97, 150-170, 200-220, and 295-315; these read IAGF…TLGI, PILG…AKGL, DGII…AFLY, VFNY…SFIL, and MVSF…EVII.

Belongs to the CobD/CbiB family.

Its subcellular location is the cell membrane. The protein operates within cofactor biosynthesis; adenosylcobalamin biosynthesis. Functionally, converts cobyric acid to cobinamide by the addition of aminopropanol on the F carboxylic group. In Clostridium perfringens (strain 13 / Type A), this protein is Cobalamin biosynthesis protein CobD.